Consider the following 660-residue polypeptide: tRNA 5-methylaminomethyl-2-thiouridine biosynthesis bifunctional protein MnmC (660 aa).

A tRNA (mnm(5)s(2)U34)-methyltransferase region spans residues 1–233 (MTHSHAQLVW…KRHISHGWIA (233 aa)). Residues 260-660 (VGGGLAGAAS…IRRKLDPDAL (401 aa)) form an FAD-dependent cmnm(5)s(2)U34 oxidoreductase region.

It in the N-terminal section; belongs to the methyltransferase superfamily. tRNA (mnm(5)s(2)U34)-methyltransferase family. In the C-terminal section; belongs to the DAO family. FAD serves as cofactor.

Its subcellular location is the cytoplasm. The enzyme catalyses 5-aminomethyl-2-thiouridine(34) in tRNA + S-adenosyl-L-methionine = 5-methylaminomethyl-2-thiouridine(34) in tRNA + S-adenosyl-L-homocysteine + H(+). Functionally, catalyzes the last two steps in the biosynthesis of 5-methylaminomethyl-2-thiouridine (mnm(5)s(2)U) at the wobble position (U34) in tRNA. Catalyzes the FAD-dependent demodification of cmnm(5)s(2)U34 to nm(5)s(2)U34, followed by the transfer of a methyl group from S-adenosyl-L-methionine to nm(5)s(2)U34, to form mnm(5)s(2)U34. The sequence is that of tRNA 5-methylaminomethyl-2-thiouridine biosynthesis bifunctional protein MnmC from Chromobacterium violaceum (strain ATCC 12472 / DSM 30191 / JCM 1249 / CCUG 213 / NBRC 12614 / NCIMB 9131 / NCTC 9757 / MK).